The following is a 633-amino-acid chain: Chaperone protein DnaK (633 aa).

Phosphothreonine; by autocatalysis is present on T198.

The protein belongs to the heat shock protein 70 family.

Acts as a chaperone. This chain is Chaperone protein DnaK, found in Rhodopseudomonas palustris (strain HaA2).